Consider the following 316-residue polypeptide: L-lactate dehydrogenase (316 aa).

34 to 39 (DVVEGV) lines the NAD(+) pocket. Residues Arg89, Asn121, and Arg152 each coordinate substrate. Residue Asn121 participates in NAD(+) binding. His172 acts as the Proton acceptor in catalysis.

The protein belongs to the LDH/MDH superfamily. LDH family. In terms of assembly, homotetramer.

It catalyses the reaction (S)-lactate + NAD(+) = pyruvate + NADH + H(+). The protein operates within fermentation; pyruvate fermentation to lactate; (S)-lactate from pyruvate: step 1/1. This Botryococcus braunii (Green alga) protein is L-lactate dehydrogenase.